A 293-amino-acid chain; its full sequence is NAD kinase (293 aa).

Asp-73 acts as the Proton acceptor in catalysis. NAD(+)-binding positions include 73–74 (DG), His-78, 147–148 (ND), Arg-158, Arg-175, Asp-177, 188–193 (TAYALS), and Gln-248.

This sequence belongs to the NAD kinase family. It depends on a divalent metal cation as a cofactor.

It localises to the cytoplasm. The enzyme catalyses NAD(+) + ATP = ADP + NADP(+) + H(+). Its function is as follows. Involved in the regulation of the intracellular balance of NAD and NADP, and is a key enzyme in the biosynthesis of NADP. Catalyzes specifically the phosphorylation on 2'-hydroxyl of the adenosine moiety of NAD to yield NADP. This chain is NAD kinase, found in Nitrosococcus oceani (strain ATCC 19707 / BCRC 17464 / JCM 30415 / NCIMB 11848 / C-107).